The following is an 89-amino-acid chain: Protein S100-A6 (89 aa).

2 EF-hand domains span residues 12 to 47 and 48 to 83; these read LVAI…IGAK and LQDA…LALI. Positions 28 and 33 each coordinate Ca(2+). K40 bears the N6-acetyllysine mark. The residue at position 47 (K47) is an N6-acetyllysine; alternate. An N6-succinyllysine; alternate modification is found at K47. 5 residues coordinate Ca(2+): D61, N63, D65, E67, and E72.

It belongs to the S-100 family. As to quaternary structure, homodimer; head to tail assembly of 2 subunits. Interacts with CACYBP in a calcium-dependent manner. Interacts with ANXA2 and ANXA11 (via N-terminus). Interacts with SUGT1. Interacts with TP53; has higher affinity for TP53 that is phosphorylated on its N-terminal domain, and lower affinity for TP53 that is phosphorylated on its C-terminal domain. Interacts with tropomyosin. Interacts with FKBP4. Interacts with PPP5C (via TPR repeats); the interaction is calcium-dependent and modulates PPP5C activity. Interacts with TPPP; this interaction inhibits TPPP dimerization.

The protein localises to the nucleus envelope. It localises to the cytoplasm. It is found in the cell membrane. Its function is as follows. May function as calcium sensor and modulator, contributing to cellular calcium signaling. May function by interacting with other proteins, such as TPR-containing proteins, and indirectly play a role in many physiological processes such as the reorganization of the actin cytoskeleton and in cell motility. Binds 2 calcium ions. Calcium binding is cooperative. The protein is Protein S100-A6 (S100a6) of Rattus norvegicus (Rat).